A 151-amino-acid chain; its full sequence is MVKAVCVLAGSGDVKGVVRFEQQDDGDVTVEGKIEGLTDGNHGFHIHVFGDNTNGCLSAGPHFNPQNKNHGSPKDADRHVGDLGNVTAEGGVAQFKFTDPQISLKGERSIIGRTAVVHEKQDDLGKGGDDESLKTGNAGGRLACGVIGFCP.

The S-palmitoyl cysteine moiety is linked to residue C6. Cu cation is bound by residues H45, H47, and H62. The cysteines at positions 56 and 144 are disulfide-linked. Residues H62, H70, H79, and D82 each contribute to the Zn(2+) site. H118 contacts Cu cation.

This sequence belongs to the Cu-Zn superoxide dismutase family. Homodimer, and heterodimer of Superoxide dismutase [Cu-Zn] A and B. Requires Cu cation as cofactor. The cofactor is Zn(2+).

The protein resides in the cytoplasm. It is found in the nucleus. It catalyses the reaction 2 superoxide + 2 H(+) = H2O2 + O2. Functionally, destroys radicals which are normally produced within the cells and which are toxic to biological systems. This is Superoxide dismutase [Cu-Zn] A (sod1-a) from Xenopus laevis (African clawed frog).